A 294-amino-acid chain; its full sequence is Shikimate kinase (294 aa).

ATP is bound at residue 87–97 (PLAGGLKSSSA).

Belongs to the GHMP kinase family. Archaeal shikimate kinase subfamily.

It is found in the cytoplasm. It catalyses the reaction shikimate + ATP = 3-phosphoshikimate + ADP + H(+). Its pathway is metabolic intermediate biosynthesis; chorismate biosynthesis; chorismate from D-erythrose 4-phosphate and phosphoenolpyruvate: step 5/7. This chain is Shikimate kinase (aroK), found in Methanosarcina acetivorans (strain ATCC 35395 / DSM 2834 / JCM 12185 / C2A).